The chain runs to 703 residues: Heat shock protein 75 kDa, mitochondrial (703 aa).

The transit peptide at 1-56 directs the protein to the mitochondrion; that stretch reads MARELRMLLLWGRRLRAPALAAACGGKPVLCPWRPPAQSWGPPRSLASSFHVGRPF. Asparagine 118 and aspartate 157 together coordinate ATP. Serine 169 bears the Phosphoserine mark. Asparagine 170 contacts ATP. Phosphothreonine is present on threonine 173. Phenylalanine 204 and arginine 401 together coordinate ATP. 3 positions are modified to N6-acetyllysine: lysine 423, lysine 430, and lysine 465. Threonine 493 carries the post-translational modification Phosphothreonine.

This sequence belongs to the heat shock protein 90 family. Binds to the intracellular domain of tumor necrosis factor type 1 receptor. Binds to RB1. Interacts with SRC. Interacts with SDHA.

Its subcellular location is the mitochondrion. It is found in the mitochondrion inner membrane. It localises to the mitochondrion matrix. Functionally, chaperone that expresses an ATPase activity. Involved in maintaining mitochondrial function and polarization, downstream of PINK1 and mitochondrial complex I. Is a negative regulator of mitochondrial respiration able to modulate the balance between oxidative phosphorylation and aerobic glycolysis. The impact of TRAP1 on mitochondrial respiration is probably mediated by modulation of mitochondrial SRC and inhibition of SDHA. The sequence is that of Heat shock protein 75 kDa, mitochondrial (TRAP1) from Bos taurus (Bovine).